We begin with the raw amino-acid sequence, 838 residues long: Tuftelin-interacting protein 11 (838 aa).

Over residues 1–13 (MSLSHLYRDGEGH) the composition is skewed to basic and acidic residues. Residues 1 to 51 (MSLSHLYRDGEGHLDDDDDDERENFEITDWDLQNEFNPNRQRHWQTKEEAT) form a required for interaction with DHX15 region. Disordered stretches follow at residues 1 to 74 (MSLS…RARD) and 86 to 137 (LKKG…SGGT). Phosphoserine is present on S2. Over residues 14–29 (LDDDDDDERENFEITD) the composition is skewed to acidic residues. The segment covering 45–65 (QTKEEATYGVWAERDSDEERP) has biased composition (basic and acidic residues). S60, S96, and S99 each carry phosphoserine. A compositionally biased stretch (acidic residues) spans 92–101 (EEADSEDSDA). Residues 102 to 117 (EEKPVKQEDFPKDLGP) are compositionally biased toward basic and acidic residues. Residue S145 is modified to Phosphoserine. One can recognise a G-patch domain in the interval 150 to 196 (TKGIGQKLLQKMGYVPGRGLGKNAQGIINPIEAKQRKGKGAVGAYGS). Residues 193-237 (AYGSERTTQSLQDFPVADSEEEAEEEFQKELSQWRKDPSGSKKKP) are disordered. S211 is subject to Phosphoserine. Residues 218–232 (EFQKELSQWRKDPSG) show a composition bias toward basic and acidic residues. The Nuclear localization signal signature appears at 701 to 706 (VKDKFN). Positions 711–735 (IMNRAVSSNVGAYMQPGARENIAYL) are required for nuclear speckle localization.

The protein belongs to the TFP11/STIP family. Identified in the spliceosome C complex. Found in the Intron Large (IL) complex, a post-mRNA release spliceosomal complex containing the excised intron, U2, U5 and U6 snRNPs, and splicing factors. Interacts with TUFT1. Interacts with DHX15; indicative for a recruitment of DHX15 to the IL complex. Interacts with GCFC2. Widely expressed. In tooth it is expressed in ameloblasts and odontoblasts.

The protein resides in the cytoplasm. It is found in the nucleus. Involved in pre-mRNA splicing, specifically in spliceosome disassembly during late-stage splicing events. Intron turnover seems to proceed through reactions in two lariat-intron associated complexes termed Intron Large (IL) and Intron Small (IS). In cooperation with DHX15 seems to mediate the transition of the U2, U5 and U6 snRNP-containing IL complex to the snRNP-free IS complex leading to efficient debranching and turnover of excised introns. May play a role in the differentiation of ameloblasts and odontoblasts or in the forming of the enamel extracellular matrix. The sequence is that of Tuftelin-interacting protein 11 (Tfip11) from Mus musculus (Mouse).